Here is a 185-residue protein sequence, read N- to C-terminus: Capsid protein (185 aa).

A disordered region spans residues asparagine 136–cysteine 185. Residues valine 149–serine 178 are compositionally biased toward basic residues. Residues serine 157, serine 164, and serine 172 each carry the phosphoserine; by host modification. The stretch at serine 157–proline 163 is one 1; half-length repeat. Positions serine 157–glutamine 179 are 3 X 8 AA repeats of S-P-R-R-R-[PR]-S-Q. The short motif at arginine 160–arginine 177 is the Bipartite nuclear localization signal element. Repeat copies occupy residues serine 164–glutamine 171 and serine 172–glutamine 179. The interval glutamine 179 to cysteine 185 is RNA binding.

This sequence belongs to the orthohepadnavirus core antigen family. In terms of assembly, homodimerizes, then multimerizes. Interacts with cytosol exposed regions of viral L glycoprotein present in the reticulum-to-Golgi compartment. Interacts with human FLNB. Phosphorylated form interacts with host importin alpha; this interaction depends on the exposure of the NLS, which itself depends upon genome maturation and/or phosphorylation of the capsid protein. Interacts with host NUP153. Phosphorylated by host SRPK1, SRPK2, and maybe protein kinase C or GAPDH. Phosphorylation is critical for pregenomic RNA packaging. Protein kinase C phosphorylation is stimulated by HBx protein and may play a role in transport of the viral genome to the nucleus at the late step during the viral replication cycle.

Its subcellular location is the virion. It is found in the host cytoplasm. Self assembles to form an icosahedral capsid. Most capsids appear to be large particles with an icosahedral symmetry of T=4 and consist of 240 copies of capsid protein, though a fraction forms smaller T=3 particles consisting of 180 capsid proteins. Entering capsids are transported along microtubules to the nucleus. Phosphorylation of the capsid is thought to induce exposure of nuclear localization signal in the C-terminal portion of the capsid protein that allows binding to the nuclear pore complex via the importin (karyopherin-) alpha and beta. Capsids are imported in intact form through the nuclear pore into the nuclear basket, where it probably binds NUP153. Only capsids that contain the mature viral genome can release the viral DNA and capsid protein into the nucleoplasm. Immature capsids get stuck in the basket. Capsids encapsulate the pre-genomic RNA and the P protein. Pre-genomic RNA is reverse-transcribed into DNA while the capsid is still in the cytoplasm. The capsid can then either be directed to the nucleus, providing more genomes for transcription, or bud through the endoplasmic reticulum to provide new virions. This is Capsid protein from Hepatitis B virus genotype A1 subtype adw (isolate Philippines/pFDW294/1988) (HBV-A).